The following is a 225-amino-acid chain: NAD(P)H-quinone oxidoreductase subunit K, chloroplastic (225 aa).

Positions 43, 44, 108, and 139 each coordinate [4Fe-4S] cluster.

This sequence belongs to the complex I 20 kDa subunit family. As to quaternary structure, NDH is composed of at least 16 different subunits, 5 of which are encoded in the nucleus. [4Fe-4S] cluster is required as a cofactor.

The protein localises to the plastid. It localises to the chloroplast thylakoid membrane. The catalysed reaction is a plastoquinone + NADH + (n+1) H(+)(in) = a plastoquinol + NAD(+) + n H(+)(out). It carries out the reaction a plastoquinone + NADPH + (n+1) H(+)(in) = a plastoquinol + NADP(+) + n H(+)(out). Functionally, NDH shuttles electrons from NAD(P)H:plastoquinone, via FMN and iron-sulfur (Fe-S) centers, to quinones in the photosynthetic chain and possibly in a chloroplast respiratory chain. The immediate electron acceptor for the enzyme in this species is believed to be plastoquinone. Couples the redox reaction to proton translocation, and thus conserves the redox energy in a proton gradient. This is NAD(P)H-quinone oxidoreductase subunit K, chloroplastic from Arabis hirsuta (Hairy rock-cress).